The following is a 161-amino-acid chain: Protein-export protein SecB (161 aa).

This sequence belongs to the SecB family. In terms of assembly, homotetramer, a dimer of dimers. One homotetramer interacts with 1 SecA dimer.

It localises to the cytoplasm. Functionally, one of the proteins required for the normal export of preproteins out of the cell cytoplasm. It is a molecular chaperone that binds to a subset of precursor proteins, maintaining them in a translocation-competent state. It also specifically binds to its receptor SecA. The chain is Protein-export protein SecB from Shewanella baltica (strain OS223).